Consider the following 254-residue polypeptide: Methylthioribulose-1-phosphate dehydratase (254 aa).

Cys-110 contributes to the substrate binding site. 2 residues coordinate Zn(2+): His-127 and His-129. The Proton donor/acceptor role is filled by Glu-156. His-212 is a Zn(2+) binding site.

The protein belongs to the aldolase class II family. MtnB subfamily. Requires Zn(2+) as cofactor.

The protein localises to the cytoplasm. The catalysed reaction is 5-(methylsulfanyl)-D-ribulose 1-phosphate = 5-methylsulfanyl-2,3-dioxopentyl phosphate + H2O. It functions in the pathway amino-acid biosynthesis; L-methionine biosynthesis via salvage pathway; L-methionine from S-methyl-5-thio-alpha-D-ribose 1-phosphate: step 2/6. In terms of biological role, catalyzes the dehydration of methylthioribulose-1-phosphate (MTRu-1-P) into 2,3-diketo-5-methylthiopentyl-1-phosphate (DK-MTP-1-P). This is Methylthioribulose-1-phosphate dehydratase from Talaromyces marneffei (strain ATCC 18224 / CBS 334.59 / QM 7333) (Penicillium marneffei).